We begin with the raw amino-acid sequence, 235 residues long: Small ribosomal subunit protein uS3 (235 aa).

Positions 39–107 constitute a KH type-2 domain; sequence VRLFLRKELF…PTQINIAEIR (69 aa).

It belongs to the universal ribosomal protein uS3 family. In terms of assembly, part of the 30S ribosomal subunit. Forms a tight complex with proteins S10 and S14.

In terms of biological role, binds the lower part of the 30S subunit head. Binds mRNA in the 70S ribosome, positioning it for translation. This is Small ribosomal subunit protein uS3 from Buchnera aphidicola subsp. Baizongia pistaciae (strain Bp).